We begin with the raw amino-acid sequence, 270 residues long: NFAT activation molecule 1 (270 aa).

Positions M1–G42 are cleaved as a signal peptide. The Extracellular portion of the chain corresponds to Q43 to K163. Positions L50 to R150 constitute an Ig-like V-type domain. A disulfide bridge links C65 with C114. Residue N107 is glycosylated (N-linked (GlcNAc...) asparagine). The helical transmembrane segment at L164–L184 threads the bilayer. The Cytoplasmic portion of the chain corresponds to L185–L270. The tract at residues R190–V219 is disordered. The span at P194–D204 shows a compositional bias: basic and acidic residues. Residues S207–V219 show a composition bias toward polar residues. Positions S209–E237 constitute an ITAM domain. 2 positions are modified to phosphotyrosine: Y220 and Y231. A disordered region spans residues I234–E262. The span at G239 to S250 shows a compositional bias: polar residues.

No direct interaction with the B-cell antigen receptor (BCR). Interacts with SYK; probably involved in BCR signaling. Interacts with ZAP70. Post-translationally, N-glycosylated. Highly expressed in neutrophils, primary monocytes, mast cells, monocytic cell lines and lymphocytes. Also expressed in spleen B and T-cells, and lung. Expressed at low level in non-immune tissue.

It is found in the cell membrane. May function in immune system as a receptor which activates via the calcineurin/NFAT-signaling pathway the downstream cytokine gene promoters. Activates the transcription of IL-13 and TNF-alpha promoters. May be involved in the regulation of B-cell, but not T-cell, development. Overexpression activates downstream effectors without ligand binding or antibody cross-linking. This is NFAT activation molecule 1 (NFAM1) from Homo sapiens (Human).